The following is a 246-amino-acid chain: 4'-phosphopantetheinyl transferase Svp (246 aa).

Residues 223–232 are compositionally biased toward low complexity; the sequence is AGTAEESAEG. The segment at 223 to 246 is disordered; it reads AGTAEESAEGAGKEATADDRTAVP. Residues 233–246 are compositionally biased toward basic and acidic residues; it reads AGKEATADDRTAVP.

It belongs to the P-Pant transferase superfamily. Gsp/Sfp/HetI/AcpT family.

The enzyme catalyses apo-[ACP] + CoA = holo-[ACP] + adenosine 3',5'-bisphosphate + H(+). In terms of biological role, transfers the 4'-phosphopantetheine moiety from coenzyme A to a Ser of an acyl-carrier-protein. The enzyme is able to transfer the cofactor to a broad range of enzymes with acyl- or peptidyl-carrier protein domains. The polypeptide is 4'-phosphopantetheinyl transferase Svp (svp) (Streptomyces mobaraensis (Streptoverticillium mobaraense)).